A 121-amino-acid polypeptide reads, in one-letter code: Small ribosomal subunit protein uS13 (121 aa).

A disordered region spans residues 92-121 (RKGLPMRGQRTRTNARTRKGPRRAAQALKK).

It belongs to the universal ribosomal protein uS13 family. Part of the 30S ribosomal subunit. Forms a loose heterodimer with protein S19. Forms two bridges to the 50S subunit in the 70S ribosome.

Functionally, located at the top of the head of the 30S subunit, it contacts several helices of the 16S rRNA. In the 70S ribosome it contacts the 23S rRNA (bridge B1a) and protein L5 of the 50S subunit (bridge B1b), connecting the 2 subunits; these bridges are implicated in subunit movement. Contacts the tRNAs in the A and P-sites. The sequence is that of Small ribosomal subunit protein uS13 from Burkholderia thailandensis (strain ATCC 700388 / DSM 13276 / CCUG 48851 / CIP 106301 / E264).